The following is a 72-amino-acid chain: Dermaseptin AA-3-4 (72 aa).

The signal sequence occupies residues M1–C22. Residues D23–E43 constitute a propeptide that is removed on maturation. Positions E24 to R45 are disordered. A compositionally biased stretch (acidic residues) spans E30–S41.

It belongs to the frog skin active peptide (FSAP) family. Expressed by the skin glands.

Its subcellular location is the secreted. Functionally, possesses a potent antimicrobial activity against Gram-positive and Gram-negative bacteria. Probably acts by disturbing membrane functions with its amphipathic structure. This Agalychnis annae (Blue-sided leaf frog) protein is Dermaseptin AA-3-4.